The sequence spans 282 residues: Probable endonuclease 4 (282 aa).

His66, His106, Glu143, Asp176, His179, His213, Asp226, His228, and Glu258 together coordinate Zn(2+).

The protein belongs to the AP endonuclease 2 family. Zn(2+) is required as a cofactor.

The catalysed reaction is Endonucleolytic cleavage to 5'-phosphooligonucleotide end-products.. In terms of biological role, endonuclease IV plays a role in DNA repair. It cleaves phosphodiester bonds at apurinic or apyrimidinic (AP) sites, generating a 3'-hydroxyl group and a 5'-terminal sugar phosphate. The polypeptide is Probable endonuclease 4 (Aquifex aeolicus (strain VF5)).